The sequence spans 657 residues: Hemocyanin (657 aa).

N-linked (GlcNAc...) asparagine glycosylation occurs at asparagine 167. Cu cation is bound by residues histidine 194, histidine 198, histidine 224, histidine 344, histidine 348, and histidine 384. Disulfide bonds link cysteine 483–cysteine 502 and cysteine 562–cysteine 609.

The protein belongs to the tyrosinase family. Hemocyanin subfamily. It consists of at least four very similar subunits. In terms of tissue distribution, hemolymph.

It is found in the secreted. The protein resides in the extracellular space. Hemocyanins are copper-containing oxygen carriers occurring freely dissolved in the hemolymph of many mollusks and arthropods. This chain is Hemocyanin, found in Palinurus vulgaris (European spiny lobster).